The following is a 689-amino-acid chain: Glycine--tRNA ligase beta subunit (689 aa).

Belongs to the class-II aminoacyl-tRNA synthetase family. As to quaternary structure, tetramer of two alpha and two beta subunits.

The protein resides in the cytoplasm. It catalyses the reaction tRNA(Gly) + glycine + ATP = glycyl-tRNA(Gly) + AMP + diphosphate. This chain is Glycine--tRNA ligase beta subunit, found in Escherichia coli O139:H28 (strain E24377A / ETEC).